A 362-amino-acid polypeptide reads, in one-letter code: D-alanine--D-alanine ligase (362 aa).

The ATP-grasp domain maps to 134–345 (KILAQRAGVP…YPDLITRLIR (212 aa)). An ATP-binding site is contributed by 170–225 (GQLGTSNLFVKPSNQGSSVGITHVTDDSNYAEALAEAFKYDDKVLVEEGIVGTEVE). Aspartate 298, glutamate 312, and asparagine 314 together coordinate Mg(2+).

Belongs to the D-alanine--D-alanine ligase family. Requires Mg(2+) as cofactor. Mn(2+) is required as a cofactor.

The protein resides in the cytoplasm. It carries out the reaction 2 D-alanine + ATP = D-alanyl-D-alanine + ADP + phosphate + H(+). It participates in cell wall biogenesis; peptidoglycan biosynthesis. Cell wall formation. This Lactobacillus delbrueckii subsp. bulgaricus (strain ATCC BAA-365 / Lb-18) protein is D-alanine--D-alanine ligase.